A 480-amino-acid chain; its full sequence is 3,6-anhydro-alpha-L-galactose dehydrogenase (480 aa).

NADP(+) contacts are provided by residues 149–150 (WN), 173–176 (KPTS), and 226–227 (GS). Residue Glu-248 is the Proton acceptor of the active site. Residue Leu-249 coordinates NADP(+). Catalysis depends on Cys-282, which acts as the Nucleophile. Residue Glu-383 coordinates NADP(+).

The protein belongs to the aldehyde dehydrogenase family.

It carries out the reaction 3,6-anhydro-alpha-L-galactopyranose + NADP(+) + H2O = 3,6-anhydro-L-galactonate + NADPH + 2 H(+). The catalysed reaction is 3,6-anhydro-alpha-L-galactopyranose + NAD(+) + H2O = 3,6-anhydro-L-galactonate + NADH + 2 H(+). Involved in the degradation of 3,6-anhydro-L-galactose, which is the major monomeric sugar of red macroalgae. Catalyzes the oxidation of 3,6-anhydro-L-galactose (AHG) to form 3,6-anhydrogalactonate (AHGA). This is 3,6-anhydro-alpha-L-galactose dehydrogenase from Vibrio sp. (strain EJY3).